The chain runs to 427 residues: Serine--tRNA ligase (427 aa).

231–233 (TAE) is an L-serine binding site. 262–264 (RSE) contacts ATP. Glutamate 285 is an L-serine binding site. Residue 349 to 352 (EISS) participates in ATP binding. L-serine is bound at residue serine 385.

The protein belongs to the class-II aminoacyl-tRNA synthetase family. Type-1 seryl-tRNA synthetase subfamily. In terms of assembly, homodimer. The tRNA molecule binds across the dimer.

It localises to the cytoplasm. The enzyme catalyses tRNA(Ser) + L-serine + ATP = L-seryl-tRNA(Ser) + AMP + diphosphate + H(+). It carries out the reaction tRNA(Sec) + L-serine + ATP = L-seryl-tRNA(Sec) + AMP + diphosphate + H(+). Its pathway is aminoacyl-tRNA biosynthesis; selenocysteinyl-tRNA(Sec) biosynthesis; L-seryl-tRNA(Sec) from L-serine and tRNA(Sec): step 1/1. In terms of biological role, catalyzes the attachment of serine to tRNA(Ser). Is also able to aminoacylate tRNA(Sec) with serine, to form the misacylated tRNA L-seryl-tRNA(Sec), which will be further converted into selenocysteinyl-tRNA(Sec). The polypeptide is Serine--tRNA ligase (Rhizobium leguminosarum bv. trifolii (strain WSM2304)).